Here is a 401-residue protein sequence, read N- to C-terminus: Haptoglobin (401 aa).

The N-terminal stretch at 1–18 is a signal peptide; it reads MSALQAVVTLLLCGQLLA. Sushi domains lie at 28–83 and 85–142; these read DSCP…ECEE and DSCP…ECEA. Disulfide bonds link C49–C81, C106–C140, and C144–C261. In terms of domain architecture, Peptidase S1 spans 157-399; the sequence is IIGGSLDAKG…ILDWVRKTIA (243 aa). Residues N286 and N316 are each glycosylated (N-linked (GlcNAc...) asparagine). 2 cysteine pairs are disulfide-bonded: C304–C335 and C346–C376. The interaction with CD163 stretch occupies residues 313 to 318; that stretch reads APKNKT.

It belongs to the peptidase S1 family. In terms of assembly, tetramer of two alpha and two beta chains; disulfide-linked. The hemoglobin/haptoglobin complex is composed of a haptoglobin dimer bound to two hemoglobin alpha-beta dimers. Interacts with CD163. Interacts with ERGIC3. In terms of tissue distribution, expressed by the liver and secreted in plasma.

Its subcellular location is the secreted. The protein localises to the extracellular space. Its function is as follows. As a result of hemolysis, hemoglobin is found to accumulate in the kidney and is secreted in the urine. Haptoglobin captures, and combines with free plasma hemoglobin to allow hepatic recycling of heme iron and to prevent kidney damage. Haptoglobin also acts as an antioxidant, has antibacterial activity and plays a role in modulating many aspects of the acute phase response. Hemoglobin/haptoglobin complexes are rapidly cleared by the macrophage CD163 scavenger receptor expressed on the surface of liver Kupfer cells through an endocytic lysosomal degradation pathway. This chain is Haptoglobin (HP), found in Bos taurus (Bovine).